The chain runs to 117 residues: Large ribosomal subunit protein uL22 (117 aa).

This sequence belongs to the universal ribosomal protein uL22 family. In terms of assembly, part of the 50S ribosomal subunit.

Its function is as follows. This protein binds specifically to 23S rRNA; its binding is stimulated by other ribosomal proteins, e.g. L4, L17, and L20. It is important during the early stages of 50S assembly. It makes multiple contacts with different domains of the 23S rRNA in the assembled 50S subunit and ribosome. Functionally, the globular domain of the protein is located near the polypeptide exit tunnel on the outside of the subunit, while an extended beta-hairpin is found that lines the wall of the exit tunnel in the center of the 70S ribosome. The protein is Large ribosomal subunit protein uL22 of Chlorobium phaeobacteroides (strain BS1).